The primary structure comprises 407 residues: Putative membrane protein 047R (407 aa).

Residues isoleucine 265 to isoleucine 337 form a disordered region. Pro residues predominate over residues proline 271–isoleucine 337. 2 helical membrane passes run asparagine 355 to proline 372 and asparagine 385 to valine 403.

It belongs to the IIV-6 337L family.

It is found in the virion membrane. This is Putative membrane protein 047R from Aedes vexans (Inland floodwater mosquito).